A 419-amino-acid chain; its full sequence is Acyl-[acyl-carrier-protein] desaturase 6, chloroplastic (419 aa).

Residues 1–54 constitute a chloroplast transit peptide; it reads MAATATMAMPLANRLRCKPNTNSSSPSRTLFGRRVTMISSSRWGSAVSGSAIMS. Residues glutamate 151, glutamate 189, histidine 192, glutamate 242, glutamate 277, and histidine 280 each contribute to the Fe cation site.

This sequence belongs to the fatty acid desaturase type 2 family. In terms of assembly, homodimer. It depends on Fe(2+) as a cofactor.

Its subcellular location is the plastid. The protein localises to the chloroplast. The protein operates within lipid metabolism; fatty acid metabolism. Functionally, introduces a cis double bond in the acyl chain of an acyl-[acyl-carrier protein]. The chain is Acyl-[acyl-carrier-protein] desaturase 6, chloroplastic from Oryza sativa subsp. japonica (Rice).